Consider the following 150-residue polypeptide: UPF0201 protein APE_1751 (150 aa).

The protein belongs to the UPF0201 family.

In Aeropyrum pernix (strain ATCC 700893 / DSM 11879 / JCM 9820 / NBRC 100138 / K1), this protein is UPF0201 protein APE_1751.